The primary structure comprises 375 residues: Succinyl-diaminopimelate desuccinylase (375 aa).

H66 provides a ligand contact to Zn(2+). D68 is an active-site residue. Residue D99 coordinates Zn(2+). Catalysis depends on E133, which acts as the Proton acceptor. Residues E134, E162, and H348 each contribute to the Zn(2+) site.

The protein belongs to the peptidase M20A family. DapE subfamily. Homodimer. The cofactor is Zn(2+). Requires Co(2+) as cofactor.

It carries out the reaction N-succinyl-(2S,6S)-2,6-diaminopimelate + H2O = (2S,6S)-2,6-diaminopimelate + succinate. Its pathway is amino-acid biosynthesis; L-lysine biosynthesis via DAP pathway; LL-2,6-diaminopimelate from (S)-tetrahydrodipicolinate (succinylase route): step 3/3. Functionally, catalyzes the hydrolysis of N-succinyl-L,L-diaminopimelic acid (SDAP), forming succinate and LL-2,6-diaminopimelate (DAP), an intermediate involved in the bacterial biosynthesis of lysine and meso-diaminopimelic acid, an essential component of bacterial cell walls. The chain is Succinyl-diaminopimelate desuccinylase from Yersinia pseudotuberculosis serotype O:1b (strain IP 31758).